Here is a 416-residue protein sequence, read N- to C-terminus: Transmembrane protease serine 11B (416 aa).

Residues 1-17 lie on the Cytoplasmic side of the membrane; the sequence is MYRHGISSQRSWPLWTT. Residues 18-38 form a helical; Signal-anchor for type II membrane protein membrane-spanning segment; the sequence is IFIFLGVAAILGVTIGLLVHF. The Extracellular portion of the chain corresponds to 39–416; that stretch reads LAVEKTYYYQ…RNWITSKTGL (378 aa). The SEA domain occupies 43 to 160; the sequence is KTYYYQGDFH…ASIKLMEISK (118 aa). Asn72 and Asn107 each carry an N-linked (GlcNAc...) asparagine glycan. The 231-residue stretch at 185–415 folds into the Peptidase S1 domain; the sequence is IVNGKSSLEG…YRNWITSKTG (231 aa). A disulfide bridge links Cys210 with Cys226. Active-site charge relay system residues include His225 and Asp270. Asn315 carries N-linked (GlcNAc...) asparagine glycosylation. 2 cysteine pairs are disulfide-bonded: Cys335–Cys351 and Cys362–Cys391. The active-site Charge relay system is Ser366.

It belongs to the peptidase S1 family.

Its subcellular location is the cell membrane. Inhibited by aprotinin, leupeptin, benzamidine, SERPINA1, SPINT1 and SPINT2. In terms of biological role, serine protease. The polypeptide is Transmembrane protease serine 11B (TMPRSS11B) (Homo sapiens (Human)).